The chain runs to 191 residues: Neurotrophic factor BDNF precursor form (191 aa).

A disordered region spans residues Gly-1–Asn-23. Residues Gly-1 to Arg-100 constitute a propeptide that is removed on maturation. Asn-93 is a glycosylation site (N-linked (GlcNAc...) asparagine). A disulfide bond links Cys-113 and Cys-180.

The protein belongs to the NGF-beta family.

Its subcellular location is the secreted. Promotes the survival of neuronal populations that are all located either in the central nervous system or directly connected to it. The chain is Neurotrophic factor BDNF precursor form (BDNF) from Anilius scytale (Coral cylinder snake).